The following is a 124-amino-acid chain: Putative melanoma-associated antigen 5P (124 aa).

The span at 1–14 shows a compositional bias: basic and acidic residues; sequence MSLEQKSQHCKPEE. Disordered regions lie at residues 1-69 and 82-103; these read MSLE…QGAS and QSIK…DPES. The MAGE domain occupies 3 to 124; it reads LEQKSQHCKP…DLIHFLLLKY (122 aa). Polar residues-rich tracts occupy residues 30 to 44 and 82 to 100; these read AATT…SSSP and QSIK…TSPD.

As to expression, expressed in many tumors of several types, such as melanoma, head and neck squamous cell carcinoma, lung carcinoma and breast carcinoma, but not in normal tissues except for testes.

Its function is as follows. May negatively regulates apoptosis. The chain is Putative melanoma-associated antigen 5P from Homo sapiens (Human).